The primary structure comprises 1686 residues: A disintegrin and metalloproteinase with thrombospondin motifs 7 (1686 aa).

A signal peptide spans Met-1 to Gly-27. The propeptide occupies Ala-28–Arg-236. Asn-94 carries N-linked (GlcNAc...) asparagine glycosylation. Positions Ser-202–Tyr-209 match the Cysteine switch motif. Cys-204 provides a ligand contact to Zn(2+). A Peptidase M12B domain is found at Lys-242–Pro-452. Intrachain disulfides connect Cys-318–Cys-372, Cys-347–Cys-354, Cys-366–Cys-447, Cys-405–Cys-431, Cys-474–Cys-497, Cys-485–Cys-503, Cys-492–Cys-522, Cys-516–Cys-527, Cys-550–Cys-587, Cys-554–Cys-592, and Cys-565–Cys-577. A Zn(2+)-binding site is contributed by His-388. Glu-389 is a catalytic residue. Residues His-392 and His-398 each contribute to the Zn(2+) site. One can recognise a Disintegrin domain in the interval Val-462–Val-537. Residues Asp-538 to Pro-593 form the TSP type-1 1 domain. N-linked (GlcNAc...) asparagine glycosylation is found at Asn-693 and Asn-778. The tract at residues His-698–His-809 is spacer. TSP type-1 domains follow at residues Pro-821–Pro-880, Ala-881–Val-940, and Cys-942–Arg-995. Disordered regions lie at residues His-1024–Asn-1043, Pro-1080–Val-1257, and Leu-1344–Pro-1396. A compositionally biased stretch (polar residues) spans Asp-1182 to Gln-1205. Basic and acidic residues predominate over residues Trp-1210–Gly-1226. Residues Pro-1360–Ser-1375 show a composition bias toward low complexity. 4 TSP type-1 domains span residues Arg-1411 to His-1459, Pro-1462 to Leu-1522, Ser-1523 to Thr-1567, and Pro-1569 to Glu-1629. The PLAC domain maps to Glu-1632 to Ser-1672. The disordered stretch occupies residues Arg-1666–Arg-1686.

Interacts with COMP. Zn(2+) is required as a cofactor. N-glycosylated. Can be O-fucosylated by POFUT2 on a serine or a threonine residue found within the consensus sequence C1-X(2)-(S/T)-C2-G of the TSP type-1 repeat domains where C1 and C2 are the first and second cysteine residue of the repeat, respectively. Fucosylated repeats can then be further glycosylated by the addition of a beta-1,3-glucose residue by the glucosyltransferase, B3GALTL. Fucosylation mediates the efficient secretion of ADAMTS family members. Can also be C-glycosylated with one or two mannose molecules on tryptophan residues within the consensus sequence W-X-X-W of the TPRs. N- and C-glycosylations can also facilitate secretion. In terms of processing, O-glycosylated proteoglycan; contains chondroitin sulfate. Post-translationally, may be cleaved by a furin endopeptidase. The precursor is sequentially processed. As to expression, expressed in heart, brain, placenta, lung, liver, skeletal muscle, kidney and pancreas. Detected in meniscus, bone, tendon, cartilage, synovium, fat and ligaments.

The protein localises to the secreted. It localises to the extracellular space. It is found in the extracellular matrix. Its function is as follows. Metalloprotease. Was previously shown to degrade COMP. However, a later study found no activity against COMP. This is A disintegrin and metalloproteinase with thrombospondin motifs 7 (ADAMTS7) from Homo sapiens (Human).